The following is a 581-amino-acid chain: NADH-quinone oxidoreductase subunit C/D (581 aa).

An NADH dehydrogenase I subunit C region spans residues 1-172 (MSAFELVTEL…PLFNMTASLF (172 aa)). An NADH dehydrogenase I subunit D region spans residues 196-581 (ELMILNYGPH…IDYVMSDVDR (386 aa)).

In the N-terminal section; belongs to the complex I 30 kDa subunit family. The protein in the C-terminal section; belongs to the complex I 49 kDa subunit family. As to quaternary structure, NDH-1 is composed of 13 different subunits. Subunits NuoB, CD, E, F, and G constitute the peripheral sector of the complex.

Its subcellular location is the cell inner membrane. The enzyme catalyses a quinone + NADH + 5 H(+)(in) = a quinol + NAD(+) + 4 H(+)(out). Its function is as follows. NDH-1 shuttles electrons from NADH, via FMN and iron-sulfur (Fe-S) centers, to quinones in the respiratory chain. The immediate electron acceptor for the enzyme in this species is believed to be ubiquinone. Couples the redox reaction to proton translocation (for every two electrons transferred, four hydrogen ions are translocated across the cytoplasmic membrane), and thus conserves the redox energy in a proton gradient. This chain is NADH-quinone oxidoreductase subunit C/D, found in Rhodopseudomonas palustris (strain ATCC BAA-98 / CGA009).